Here is a 390-residue protein sequence, read N- to C-terminus: LL-diaminopimelate aminotransferase (390 aa).

Positions 13, 38, 102, 126, and 176 each coordinate substrate. Residues 101–102, Tyr126, Asn176, Tyr207, and 235–237 contribute to the pyridoxal 5'-phosphate site; these read SK and SVS. Lys238 carries the post-translational modification N6-(pyridoxal phosphate)lysine. Arg246 contacts pyridoxal 5'-phosphate. Arg364 lines the substrate pocket.

Belongs to the class-I pyridoxal-phosphate-dependent aminotransferase family. LL-diaminopimelate aminotransferase subfamily. Homodimer. Pyridoxal 5'-phosphate is required as a cofactor.

It carries out the reaction (2S,6S)-2,6-diaminopimelate + 2-oxoglutarate = (S)-2,3,4,5-tetrahydrodipicolinate + L-glutamate + H2O + H(+). The protein operates within amino-acid biosynthesis; L-lysine biosynthesis via DAP pathway; LL-2,6-diaminopimelate from (S)-tetrahydrodipicolinate (aminotransferase route): step 1/1. Involved in the synthesis of meso-diaminopimelate (m-DAP or DL-DAP), required for both lysine and peptidoglycan biosynthesis. Catalyzes the direct conversion of tetrahydrodipicolinate to LL-diaminopimelate. Is also able to catalyze the reverse reaction in vitro, i.e. the transamination of LL-diaminopimelate with 2-oxoglutarate to produce tetrahydrodipicolinate and glutamate. Can also use m-DAP instead of LL-DAP as the amino-group donor, and oxaloacetate instead of 2-oxoglutarate as the amino-group acceptor. This Moorella thermoacetica (strain ATCC 39073 / JCM 9320) protein is LL-diaminopimelate aminotransferase.